The primary structure comprises 748 residues: Pentatricopeptide repeat-containing protein At3g13880 (748 aa).

17 PPR repeats span residues aspartate 46–proline 80, cysteine 81–arginine 111, asparagine 112–leucine 146, aspartate 147–glutamine 181, glutamine 182–arginine 212, aspartate 213–leucine 247, threonine 248–phenylalanine 285, aspartate 286–lysine 316, asparagine 317–proline 356, serine 357–serine 391, aspartate 392–glutamine 422, aspartate 423–proline 457, glutamate 458–alanine 492, phenylalanine 493–proline 523, aspartate 524–proline 558, asparagine 559–aspartate 589, and asparagine 595–valine 629. The segment at threonine 630–glycine 705 is type E motif. The interval asparagine 706–phenylalanine 736 is type E(+) motif.

The protein belongs to the PPR family. PCMP-E subfamily.

The sequence is that of Pentatricopeptide repeat-containing protein At3g13880 (PCMP-E89) from Arabidopsis thaliana (Mouse-ear cress).